A 373-amino-acid chain; its full sequence is Zinc finger CCCH domain-containing protein 15 homolog (373 aa).

Positions 1–27 (MPPKQAQSKKTVEKEKKKKVEDKTFGL) are disordered. A compositionally biased stretch (basic and acidic residues) spans 10–25 (KTVEKEKKKKVEDKTF). 2 consecutive C3H1-type zinc fingers follow at residues 95 to 123 (DPKS…HDLA) and 167 to 205 (KPTA…HCLP). The stretch at 252 to 326 (KEEKRLQKEK…ALANQINTSL (75 aa)) forms a coiled coil. Residues 325–373 (SLFTDGGVLPSDDDDDDDDDDDDDEDGDDEEEDDDEEEGEYEEEEASDE) form a disordered region. Residues 335 to 373 (SDDDDDDDDDDDDDEDGDDEEEDDDEEEGEYEEEEASDE) show a composition bias toward acidic residues.

This sequence belongs to the ZC3H15/TMA46 family.

This chain is Zinc finger CCCH domain-containing protein 15 homolog, found in Dictyostelium discoideum (Social amoeba).